We begin with the raw amino-acid sequence, 151 residues long: UPF0735 ACT domain-containing protein SERP1207 (151 aa).

The 76-residue stretch at 74 to 149 (TLILYVNDIV…HVTKVDLISM (76 aa)) folds into the ACT domain.

Belongs to the UPF0735 family.

This is UPF0735 ACT domain-containing protein SERP1207 from Staphylococcus epidermidis (strain ATCC 35984 / DSM 28319 / BCRC 17069 / CCUG 31568 / BM 3577 / RP62A).